We begin with the raw amino-acid sequence, 440 residues long: MSYFEHIPAIRYEGPQSDNPLAYHHYDPDKRVLGKTLAEHLRIAVCYWHTFVWPGHDIFGQGAFQRPWQQPGDALERARQKADAAFEFFTKLGTPFYTFHDTDVAPEGDSLRDYAANFARMVDYLGERQQASGVRLLWGTANLFSHPRFAAGAATNPNPDVFAWAATQVCHALDATHRLGGENYVLWGGREGYETLLNTDLKRERDQFARFLSMVVEHKHRIGFKGALLIEPKPQEPTKHQYDYDVATVHGFLVQYGLQNEIRVNIEANHATLAGHSFHHEIANAFALGVFGSVDANRGDPQNGWDTDQFPNSVEELTLAFYEILRHGGFTTGGMNFDAKVRRQSIDPEDLFYGHVGAIDVLALALERAAVLVENDRLDALRRQRYAQWDDAFGRKILSGGYTLESLAADALARGVNPRHASGAQERLENIVNQAIYGLR.

Catalysis depends on residues histidine 100 and aspartate 103. Residues glutamate 231, glutamate 267, histidine 270, aspartate 295, aspartate 306, aspartate 308, and aspartate 338 each contribute to the Mg(2+) site.

This sequence belongs to the xylose isomerase family. As to quaternary structure, homotetramer. The cofactor is Mg(2+).

The protein resides in the cytoplasm. It catalyses the reaction alpha-D-xylose = alpha-D-xylulofuranose. This is Xylose isomerase from Burkholderia cenocepacia (strain HI2424).